We begin with the raw amino-acid sequence, 297 residues long: E3 ubiquitin-protein ligase TRIM52 (297 aa).

The segment at cysteine 20 to glutamate 62 adopts an RING-type; degenerate zinc-finger fold. The important for rapid proteolytic degradation by the proteasome stretch occupies residues valine 72–proline 167. The B box-type zinc-finger motif lies at asparagine 222–leucine 263. 4 residues coordinate Zn(2+): cysteine 227, histidine 230, cysteine 249, and histidine 255.

The protein belongs to the TRIM/RBCC family. In terms of assembly, (Microbial infection) Interacts with Japanese encephalitis virus non-structural protein 2 (NS2A); mediates the ubiquitination of NS2A, targeting it for proteasome-mediated degradation. Autoubiquitinated. Polyubiquitinated. Undergoes extremely rapid proteolytic degradation by the proteasome.

The protein localises to the cytoplasm. Its subcellular location is the cytosol. The protein resides in the nucleus. The enzyme catalyses S-ubiquitinyl-[E2 ubiquitin-conjugating enzyme]-L-cysteine + [acceptor protein]-L-lysine = [E2 ubiquitin-conjugating enzyme]-L-cysteine + N(6)-ubiquitinyl-[acceptor protein]-L-lysine.. It participates in protein modification; protein ubiquitination. E3 ubiquitin-protein ligase. Positively regulates the NF-kappa-B signaling pathway. Its function is as follows. (Microbial infection) Exhibits antiviral activity against Japanese encephalitis virus (JEV). Ubiquitinates the viral non-structural protein 2 (NS2A) and targets it for proteasome-mediated degradation. The sequence is that of E3 ubiquitin-protein ligase TRIM52 (TRIM52) from Homo sapiens (Human).